We begin with the raw amino-acid sequence, 163 residues long: Phosphopantetheine adenylyltransferase (163 aa).

S10 contributes to the substrate binding site. ATP contacts are provided by residues 10 to 11 (SF) and H18. Substrate contacts are provided by K42, L74, and R88. ATP is bound by residues 89 to 91 (GLR), E99, and 124 to 130 (YSFLSSS).

This sequence belongs to the bacterial CoaD family. Homohexamer. It depends on Mg(2+) as a cofactor.

It localises to the cytoplasm. The catalysed reaction is (R)-4'-phosphopantetheine + ATP + H(+) = 3'-dephospho-CoA + diphosphate. It functions in the pathway cofactor biosynthesis; coenzyme A biosynthesis; CoA from (R)-pantothenate: step 4/5. Reversibly transfers an adenylyl group from ATP to 4'-phosphopantetheine, yielding dephospho-CoA (dPCoA) and pyrophosphate. The sequence is that of Phosphopantetheine adenylyltransferase from Bacillus anthracis (strain A0248).